Consider the following 122-residue polypeptide: Large ribosomal subunit protein bL12 (122 aa).

The protein belongs to the bacterial ribosomal protein bL12 family. In terms of assembly, homodimer. Part of the ribosomal stalk of the 50S ribosomal subunit. Forms a multimeric L10(L12)X complex, where L10 forms an elongated spine to which 2 to 4 L12 dimers bind in a sequential fashion. Binds GTP-bound translation factors.

Forms part of the ribosomal stalk which helps the ribosome interact with GTP-bound translation factors. Is thus essential for accurate translation. The chain is Large ribosomal subunit protein bL12 from Vibrio vulnificus (strain CMCP6).